We begin with the raw amino-acid sequence, 470 residues long: Acyltransferase BOA11 (470 aa).

H156 functions as the Proton acceptor in the catalytic mechanism.

The protein belongs to the plant acyltransferase family.

The protein operates within polyketide biosynthesis. Acyltransferase; part of the gene cluster B that mediates the biosynthesis of botcinic acid and its botcinin derivatives, acetate-derived polyketides that contribute to virulence when combined with the sesquiterpene botrydial. Botcinic acid and its derivatives have been shown to induce chlorosis and necrosis during host plant infection, but also have antifungal activities. Two polyketide synthases, BOA6 and BOA9, are involved in the biosynthesis of botcinins. BOA6 mediates the formation of the per-methylated tetraketide core by condensation of four units of malonyl-CoA with one unit of acetyl-CoA, which would be methylated in activated methylene groups to yield a bicyclic acid intermediate that could then either be converted to botrylactone derivatives or lose the starter acetate unit through a retro-Claisen type C-C bond cleavage to yield botcinin derivatives. The second polyketide synthase, BOA9, is probably required for the biosynthesis of the tetraketide side chain of botcinins. The methyltransferase (MT) domain within BOA6 is probably responsible for the incorporation of four methyl groups. The trans-enoyl reductase BOA5 might take over the enoyl reductase function of BOA6 that misses an ER domain. The monooxygenases BOA2, BOA3 and BOA4 might be involved in further hydroxylations at C4, C5 and C8, whereas BOA7, close to BOA9, could potentially be involved in the hydroxylation at C4 in the side chain of botcinins. The chain is Acyltransferase BOA11 from Botryotinia fuckeliana (strain B05.10) (Noble rot fungus).